A 290-amino-acid polypeptide reads, in one-letter code: UDP-N-acetylenolpyruvoylglucosamine reductase (290 aa).

The region spanning 20–187 (GVGGESEMWF…SRVRLKLRPS (168 aa)) is the FAD-binding PCMH-type domain. Arginine 167 is an active-site residue.

This sequence belongs to the MurB family. It depends on FAD as a cofactor.

The protein localises to the cytoplasm. It catalyses the reaction UDP-N-acetyl-alpha-D-muramate + NADP(+) = UDP-N-acetyl-3-O-(1-carboxyvinyl)-alpha-D-glucosamine + NADPH + H(+). Its pathway is cell wall biogenesis; peptidoglycan biosynthesis. In terms of biological role, cell wall formation. This is UDP-N-acetylenolpyruvoylglucosamine reductase from Deinococcus radiodurans (strain ATCC 13939 / DSM 20539 / JCM 16871 / CCUG 27074 / LMG 4051 / NBRC 15346 / NCIMB 9279 / VKM B-1422 / R1).